Consider the following 121-residue polypeptide: Large ribosomal subunit protein uL18 (121 aa).

Belongs to the universal ribosomal protein uL18 family. Part of the 50S ribosomal subunit; part of the 5S rRNA/L5/L18/L25 subcomplex. Contacts the 5S and 23S rRNAs.

Its function is as follows. This is one of the proteins that bind and probably mediate the attachment of the 5S RNA into the large ribosomal subunit, where it forms part of the central protuberance. The chain is Large ribosomal subunit protein uL18 from Roseiflexus castenholzii (strain DSM 13941 / HLO8).